Here is a 375-residue protein sequence, read N- to C-terminus: N5-carboxyaminoimidazole ribonucleotide synthase (375 aa).

ATP contacts are provided by residues arginine 108, lysine 148, 153–159, 183–186, glutamate 191, histidine 214, and 266–267; these read GYDGKGQ, EQYL, and NE. The ATP-grasp domain maps to 112–296; that stretch reads KQTLLEANTQ…QFDTHILAIT (185 aa).

It belongs to the PurK/PurT family. In terms of assembly, homodimer.

It carries out the reaction 5-amino-1-(5-phospho-beta-D-ribosyl)imidazole + hydrogencarbonate + ATP = 5-carboxyamino-1-(5-phospho-D-ribosyl)imidazole + ADP + phosphate + 2 H(+). Its pathway is purine metabolism; IMP biosynthesis via de novo pathway; 5-amino-1-(5-phospho-D-ribosyl)imidazole-4-carboxylate from 5-amino-1-(5-phospho-D-ribosyl)imidazole (N5-CAIR route): step 1/2. Functionally, catalyzes the ATP-dependent conversion of 5-aminoimidazole ribonucleotide (AIR) and HCO(3)(-) to N5-carboxyaminoimidazole ribonucleotide (N5-CAIR). The protein is N5-carboxyaminoimidazole ribonucleotide synthase of Staphylococcus epidermidis (strain ATCC 12228 / FDA PCI 1200).